We begin with the raw amino-acid sequence, 184 residues long: Ribosome maturation factor RimP (184 aa).

This sequence belongs to the RimP family.

The protein resides in the cytoplasm. Its function is as follows. Required for maturation of 30S ribosomal subunits. This chain is Ribosome maturation factor RimP, found in Corynebacterium diphtheriae (strain ATCC 700971 / NCTC 13129 / Biotype gravis).